The sequence spans 363 residues: Ribosomal RNA large subunit methyltransferase M (363 aa).

S-adenosyl-L-methionine is bound by residues Ser190, 223–226 (CPGG), Asp242, Asp262, and Asp280. Lys309 serves as the catalytic Proton acceptor.

Belongs to the class I-like SAM-binding methyltransferase superfamily. RNA methyltransferase RlmE family. RlmM subfamily. As to quaternary structure, monomer.

The protein localises to the cytoplasm. It carries out the reaction cytidine(2498) in 23S rRNA + S-adenosyl-L-methionine = 2'-O-methylcytidine(2498) in 23S rRNA + S-adenosyl-L-homocysteine + H(+). Its function is as follows. Catalyzes the 2'-O-methylation at nucleotide C2498 in 23S rRNA. The chain is Ribosomal RNA large subunit methyltransferase M from Actinobacillus pleuropneumoniae serotype 5b (strain L20).